A 239-amino-acid polypeptide reads, in one-letter code: MQILPAIDIKDGQAVRLFKGDFNQKTVVNPDIIEQAKTFKNAGIQFIHLVDLDGTLDGRATNRDLITEVKKISGLGIEVGGGIRTLEQIRDYLAVGIDRIIIGSMAVKDPDFVRAALEEFGADRIVVGIDAKAGLVATEGWLETSNVDYITLAKEMEKMGVTLFIYTDVDRDGTLTGPNLDHYKCLVSELTTAKVIASGGVAELADLNHLQEIGVAGTIVGKAYYNGNITLDQLKSFGG.

Residue Asp-8 is the Proton acceptor of the active site. Asp-130 serves as the catalytic Proton donor.

Belongs to the HisA/HisF family.

The protein localises to the cytoplasm. The catalysed reaction is 1-(5-phospho-beta-D-ribosyl)-5-[(5-phospho-beta-D-ribosylamino)methylideneamino]imidazole-4-carboxamide = 5-[(5-phospho-1-deoxy-D-ribulos-1-ylimino)methylamino]-1-(5-phospho-beta-D-ribosyl)imidazole-4-carboxamide. It functions in the pathway amino-acid biosynthesis; L-histidine biosynthesis; L-histidine from 5-phospho-alpha-D-ribose 1-diphosphate: step 4/9. This Streptococcus thermophilus (strain ATCC BAA-491 / LMD-9) protein is 1-(5-phosphoribosyl)-5-[(5-phosphoribosylamino)methylideneamino] imidazole-4-carboxamide isomerase.